We begin with the raw amino-acid sequence, 308 residues long: Protein UL135 (308 aa).

An N-terminal signal peptide occupies residues 1–22 (MVWLWLGVGLLGGTGLASLVLA). The interval 105–274 (KPEFPPARFE…TEPTTLPIVS (170 aa)) is disordered. Positions 126 to 145 (SIGRSPSHCSSSSSLSSSAS) are enriched in low complexity. 2 stretches are compositionally biased toward pro residues: residues 152 to 163 (QPPPSWKPPPPP) and 219 to 238 (PVTP…PRNP).

Belongs to the HCMV UL135 family. In terms of assembly, interacts with host components of the WAVE2 complex ABI1, NAP1 and WAVE2. Also interacts with host ABI2 and TLN1.

It localises to the host cell membrane. The protein localises to the host Golgi apparatus. Remodels the host actin cytoskeleton in order to impair immune recognition of infected cells. Mechanistically, interacts with members of the host WAVE2 complex and redirects the complex to the plasma membrane. In turn, the efficiency of immune synapse formation is greatly reduced. This Human cytomegalovirus (strain Merlin) (HHV-5) protein is Protein UL135 (UL135).